Reading from the N-terminus, the 119-residue chain is Large ribosomal subunit protein uL24 (119 aa).

Belongs to the universal ribosomal protein uL24 family. As to quaternary structure, part of the 50S ribosomal subunit.

One of two assembly initiator proteins, it binds directly to the 5'-end of the 23S rRNA, where it nucleates assembly of the 50S subunit. Its function is as follows. One of the proteins that surrounds the polypeptide exit tunnel on the outside of the subunit. This chain is Large ribosomal subunit protein uL24, found in Sulfurihydrogenibium sp. (strain YO3AOP1).